A 1770-amino-acid polypeptide reads, in one-letter code: Transposon Ty2-GR1 Gag-Pol polyprotein (1770 aa).

3 stretches are compositionally biased toward polar residues: residues 1–11 (MESQQLHQNPH), 19–39 (ASVT…SASN), and 49–60 (KVNSQQETTPGT). Disordered stretches follow at residues 1–86 (MESQ…GQYQ) and 360–453 (HSEY…LPDH). Residues 295–397 (ENNINVSDRL…SSKPRAAKAH (103 aa)) form an RNA-binding region. Low complexity predominate over residues 369 to 381 (TSPNTTNTKVTTR). The segment covering 399 to 408 (IATSSKFSRV) has biased composition (polar residues). Catalysis depends on D457, which acts as the For protease activity; shared with dimeric partner. The segment at 579–636 (NVNKSKSVNKYPYPLIHRMLGHANFRSIQKSLKKNAVTYLKESDIEWSNASTYQCPDC) is integrase-type zinc finger-like. One can recognise an Integrase catalytic domain in the interval 656–831 (ESYEPFQYLH…AGLDITTILP (176 aa)). Residues D667 and D732 each contribute to the Mg(2+) site. Disordered regions lie at residues 1004 to 1034 (MGGT…STNE), 1059 to 1135 (TEEP…KSSK), 1146 to 1165 (LPLP…VSKD), and 1170 to 1205 (HSRQ…TEIE). 2 stretches are compositionally biased toward polar residues: residues 1009–1034 (ESDT…STNE) and 1065–1082 (QRNS…STPS). Residues 1151-1165 (LTHKSPTDTSDVSKD) show a composition bias toward basic and acidic residues. The Bipartite nuclear localization signal signature appears at 1193–1227 (KKRSLEDNETEIEVSRDTWNNKNMRSLEPPRSKKR). The 139-residue stretch at 1353–1491 (NDYYITQLDI…DILGLEIKYQ (139 aa)) folds into the Reverse transcriptase Ty1/copia-type domain. Positions 1361, 1442, 1443, 1625, 1667, and 1700 each coordinate Mg(2+). The region spanning 1625-1767 (DASYGNQPYY…IKTFKLLTNK (143 aa)) is the RNase H Ty1/copia-type domain.

As to quaternary structure, the capsid protein forms a homotrimer, from which the VLPs are assembled. The protease is a homodimer, whose active site consists of two apposed aspartic acid residues. Initially, virus-like particles (VLPs) are composed of the structural unprocessed proteins Gag and Gag-Pol, and also contain the host initiator methionine tRNA (tRNA(i)-Met) which serves as a primer for minus-strand DNA synthesis, and a dimer of genomic Ty RNA. Processing of the polyproteins occurs within the particle and proceeds by an ordered pathway, called maturation. First, the protease (PR) is released by autocatalytic cleavage of the Gag-Pol polyprotein, and this cleavage is a prerequisite for subsequent processing at the remaining sites to release the mature structural and catalytic proteins. Maturation takes place prior to the RT reaction and is required to produce transposition-competent VLPs.

Its subcellular location is the cytoplasm. It is found in the nucleus. The catalysed reaction is DNA(n) + a 2'-deoxyribonucleoside 5'-triphosphate = DNA(n+1) + diphosphate. The enzyme catalyses Endonucleolytic cleavage to 5'-phosphomonoester.. In terms of biological role, capsid protein (CA) is the structural component of the virus-like particle (VLP), forming the shell that encapsulates the retrotransposons dimeric RNA genome. The particles are assembled from trimer-clustered units and there are holes in the capsid shells that allow for the diffusion of macromolecules. CA also has nucleocapsid-like chaperone activity, promoting primer tRNA(i)-Met annealing to the multipartite primer-binding site (PBS), dimerization of Ty2 RNA and initiation of reverse transcription. Functionally, the aspartyl protease (PR) mediates the proteolytic cleavages of the Gag and Gag-Pol polyproteins after assembly of the VLP. Its function is as follows. Reverse transcriptase/ribonuclease H (RT) is a multifunctional enzyme that catalyzes the conversion of the retro-elements RNA genome into dsDNA within the VLP. The enzyme displays a DNA polymerase activity that can copy either DNA or RNA templates, and a ribonuclease H (RNase H) activity that cleaves the RNA strand of RNA-DNA heteroduplexes during plus-strand synthesis and hydrolyzes RNA primers. The conversion leads to a linear dsDNA copy of the retrotransposon that includes long terminal repeats (LTRs) at both ends. Integrase (IN) targets the VLP to the nucleus, where a subparticle preintegration complex (PIC) containing at least integrase and the newly synthesized dsDNA copy of the retrotransposon must transit the nuclear membrane. Once in the nucleus, integrase performs the integration of the dsDNA into the host genome. The sequence is that of Transposon Ty2-GR1 Gag-Pol polyprotein (TY2B-GR1) from Saccharomyces cerevisiae (strain ATCC 204508 / S288c) (Baker's yeast).